The chain runs to 628 residues: DNA ligase (628 aa).

NAD(+) is bound by residues 36–40 (DVEYD), 85–86 (SL), and glutamate 117. Lysine 119 (N6-AMP-lysine intermediate) is an active-site residue. NAD(+) is bound by residues arginine 140, glutamate 174, lysine 309, and lysine 333. Residues cysteine 427, cysteine 430, cysteine 446, and cysteine 452 each coordinate Zn(2+).

Belongs to the NAD-dependent DNA ligase family. LigA subfamily. Mg(2+) serves as cofactor. Mn(2+) is required as a cofactor.

It catalyses the reaction NAD(+) + (deoxyribonucleotide)n-3'-hydroxyl + 5'-phospho-(deoxyribonucleotide)m = (deoxyribonucleotide)n+m + AMP + beta-nicotinamide D-nucleotide.. Functionally, DNA ligase that catalyzes the formation of phosphodiester linkages between 5'-phosphoryl and 3'-hydroxyl groups in double-stranded DNA using NAD as a coenzyme and as the energy source for the reaction. It is essential for DNA replication and repair of damaged DNA. The chain is DNA ligase from Tropheryma whipplei (strain Twist) (Whipple's bacillus).